Here is a 326-residue protein sequence, read N- to C-terminus: Nucleotide sugar transporter SLC35D2 (326 aa).

Residues 1–15 are Extracellular-facing; it reads MEEPNAAPLPSRLAR. A helical membrane pass occupies residues 16–36; that stretch reads LLSALFYGTCSFLIVLVNKAL. The Cytoplasmic segment spans residues 37 to 41; the sequence is LTTYG. Residues 42–62 form a helical membrane-spanning segment; it reads FPSPIVLGIGQMATTIMILYV. At 63–130 the chain is on the extracellular side; sequence FKLNKIIHFP…LLEAIILGTQ (68 aa). A helical membrane pass occupies residues 131–151; sequence YSLNIILSVLAIVLGAFIAAG. At 152-155 the chain is on the cytoplasmic side; sequence SDLT. The helical transmembrane segment at 156 to 176 threads the bilayer; the sequence is FNLEGYVFVFLNDIFTAANGV. The Extracellular segment spans residues 177–189; it reads YTKQKMDPKELGK. The helical transmembrane segment at 190–210 threads the bilayer; that stretch reads YGVLFYNACFMLIPTVIISVS. The Cytoplasmic portion of the chain corresponds to 211-225; that stretch reads TGDFQQATEFRHWKN. Residues 226–246 traverse the membrane as a helical segment; that stretch reads VLFIIQFLLSCLLGFLLMYST. Residues 247–253 lie on the Extracellular side of the membrane; sequence ALCSYYN. A helical transmembrane segment spans residues 254–276; sequence SALTTAVVGAIKNVSVAYIGMLV. At 277-280 the chain is on the cytoplasmic side; sequence GGDY. The helical transmembrane segment at 281–303 threads the bilayer; that stretch reads IFSLLNFIGLNICMAGGLRYSFL. Residues 304–326 lie on the Extracellular side of the membrane; that stretch reads TLSSQLKPKQPVDEESIPLDLKS.

This sequence belongs to the TPT transporter family. SLC35D subfamily.

The protein localises to the golgi apparatus membrane. The enzyme catalyses UMP(out) + UDP-N-acetyl-alpha-D-glucosamine(in) = UMP(in) + UDP-N-acetyl-alpha-D-glucosamine(out). It carries out the reaction UMP(out) + UDP-alpha-D-glucose(in) = UMP(in) + UDP-alpha-D-glucose(out). Nucleotide sugar antiporter transporting UDP-N-acetylglucosamine (UDP-GlcNAc) and UDP-glucose (UDP-Glc) from the cytosol into the lumen of the Golgi in exchange of UMP. By supplying UDP-N-acetylglucosamine, a donor substrate to heparan sulfate synthases, probably takes part in the synthesis of these glycoconjugates. This is Nucleotide sugar transporter SLC35D2 from Mus musculus (Mouse).